Here is a 491-residue protein sequence, read N- to C-terminus: Probable cytosol aminopeptidase (491 aa).

2 residues coordinate Mn(2+): Lys-264 and Asp-269. Residue Lys-276 is part of the active site. Mn(2+) contacts are provided by Asp-287, Asp-346, and Glu-348. The active site involves Arg-350.

The protein belongs to the peptidase M17 family. The cofactor is Mn(2+).

It localises to the cytoplasm. It catalyses the reaction Release of an N-terminal amino acid, Xaa-|-Yaa-, in which Xaa is preferably Leu, but may be other amino acids including Pro although not Arg or Lys, and Yaa may be Pro. Amino acid amides and methyl esters are also readily hydrolyzed, but rates on arylamides are exceedingly low.. The catalysed reaction is Release of an N-terminal amino acid, preferentially leucine, but not glutamic or aspartic acids.. Functionally, presumably involved in the processing and regular turnover of intracellular proteins. Catalyzes the removal of unsubstituted N-terminal amino acids from various peptides. This is Probable cytosol aminopeptidase from Xylella fastidiosa (strain Temecula1 / ATCC 700964).